We begin with the raw amino-acid sequence, 145 residues long: Large ribosomal subunit protein uL13 (145 aa).

Belongs to the universal ribosomal protein uL13 family. In terms of assembly, part of the 50S ribosomal subunit.

Its function is as follows. This protein is one of the early assembly proteins of the 50S ribosomal subunit, although it is not seen to bind rRNA by itself. It is important during the early stages of 50S assembly. The chain is Large ribosomal subunit protein uL13 from Bacillus licheniformis (strain ATCC 14580 / DSM 13 / JCM 2505 / CCUG 7422 / NBRC 12200 / NCIMB 9375 / NCTC 10341 / NRRL NRS-1264 / Gibson 46).